Here is a 200-residue protein sequence, read N- to C-terminus: Ras-related protein Rab-7b (200 aa).

GTP is bound by residues 15-22 (GALGVGKT), 34-40 (YEDYQTT), 63-67 (DTGGQ), 124-127 (NKID), and 154-155 (AK). Short sequence motifs (switch) lie at residues 28–41 (YVHKTFYEDYQTTL) and 67–82 (QERFRSMVSTFYKGSD). The residue at position 186 (S186) is a Phosphoserine. Residues C199 and C200 are each lipidated (S-geranylgeranyl cysteine).

This sequence belongs to the small GTPase superfamily. Rab family.

Its subcellular location is the late endosome. The protein localises to the lysosome. The protein resides in the golgi apparatus. It localises to the trans-Golgi network. It is found in the cytoplasmic vesicle. Its subcellular location is the phagosome. The protein localises to the phagosome membrane. Its function is as follows. Controls vesicular trafficking from endosomes to the trans-Golgi network (TGN). Acts as a negative regulator of TLR9 signaling and can suppress TLR9-triggered TNFA, IL6, and IFNB production in macrophages by promoting TLR9 lysosomal degradation. Also negatively regulates TLR4 signaling in macrophages by promoting lysosomal degradation of TLR4. Promotes megakaryocytic differentiation by increasing NF-kappa-B-dependent IL6 production and subsequently enhancing the association of STAT3 with GATA1. Not involved in the regulation of the EGF- and EGFR degradation pathway. In Bos taurus (Bovine), this protein is Ras-related protein Rab-7b (RAB7B).